The sequence spans 217 residues: Uridine kinase (217 aa).

17-24 (GASASGKS) contacts ATP.

It belongs to the uridine kinase family.

The protein localises to the cytoplasm. It catalyses the reaction uridine + ATP = UMP + ADP + H(+). It carries out the reaction cytidine + ATP = CMP + ADP + H(+). Its pathway is pyrimidine metabolism; CTP biosynthesis via salvage pathway; CTP from cytidine: step 1/3. It participates in pyrimidine metabolism; UMP biosynthesis via salvage pathway; UMP from uridine: step 1/1. This Haemophilus ducreyi (strain 35000HP / ATCC 700724) protein is Uridine kinase.